The following is a 123-amino-acid chain: MKKPQRGYARQDRVKEQIMRELAELVRTGLKDPRAGFITINEVEITRDYSHATVFYTVLNQDTREITEEVLEHARGHLRSELSKRIKLFKIPELHFKYDESLERGMSLSALIDQVAAEKPVED.

The protein belongs to the RbfA family. Monomer. Binds 30S ribosomal subunits, but not 50S ribosomal subunits or 70S ribosomes.

The protein resides in the cytoplasm. Functionally, one of several proteins that assist in the late maturation steps of the functional core of the 30S ribosomal subunit. Associates with free 30S ribosomal subunits (but not with 30S subunits that are part of 70S ribosomes or polysomes). Required for efficient processing of 16S rRNA. May interact with the 5'-terminal helix region of 16S rRNA. This is Ribosome-binding factor A from Neisseria gonorrhoeae (strain ATCC 700825 / FA 1090).